Here is a 475-residue protein sequence, read N- to C-terminus: Sulfate adenylyltransferase subunit 1 (475 aa).

The tr-type G domain occupies 25–239; that stretch reads KSLLRFLTCG…EVLETVEIQR (215 aa). A G1 region spans residues 34–41; it reads GSVDDGKS. 34-41 lines the GTP pocket; the sequence is GSVDDGKS. Residues 92–96 are G2; that stretch reads GITID. Residues 113 to 116 form a G3 region; it reads DTPG. GTP contacts are provided by residues 113-117 and 168-171; these read DTPGH and NKMD. The tract at residues 168–171 is G4; that stretch reads NKMD. Residues 206–208 are G5; it reads SAL.

The protein belongs to the TRAFAC class translation factor GTPase superfamily. Classic translation factor GTPase family. CysN/NodQ subfamily. As to quaternary structure, heterodimer composed of CysD, the smaller subunit, and CysN.

The enzyme catalyses sulfate + ATP + H(+) = adenosine 5'-phosphosulfate + diphosphate. The protein operates within sulfur metabolism; hydrogen sulfide biosynthesis; sulfite from sulfate: step 1/3. In terms of biological role, with CysD forms the ATP sulfurylase (ATPS) that catalyzes the adenylation of sulfate producing adenosine 5'-phosphosulfate (APS) and diphosphate, the first enzymatic step in sulfur assimilation pathway. APS synthesis involves the formation of a high-energy phosphoric-sulfuric acid anhydride bond driven by GTP hydrolysis by CysN coupled to ATP hydrolysis by CysD. This Shigella dysenteriae serotype 1 (strain Sd197) protein is Sulfate adenylyltransferase subunit 1.